The chain runs to 360 residues: Protein Wnt-2 (360 aa).

The signal sequence occupies residues 1 to 25; sequence MNSPLRGIWLWLPLLLTWLTPEVSS. Intrachain disulfides connect cysteine 76-cysteine 87, cysteine 127-cysteine 135, cysteine 137-cysteine 157, cysteine 206-cysteine 220, cysteine 208-cysteine 215, cysteine 278-cysteine 309, cysteine 294-cysteine 304, cysteine 308-cysteine 348, cysteine 324-cysteine 339, cysteine 326-cysteine 336, and cysteine 331-cysteine 332. The O-palmitoleoyl serine; by PORCN moiety is linked to residue serine 212. Asparagine 295 carries N-linked (GlcNAc...) asparagine glycosylation.

It belongs to the Wnt family. Post-translationally, palmitoleoylation is required for efficient binding to frizzled receptors. Depalmitoleoylation leads to Wnt signaling pathway inhibition.

The protein resides in the secreted. Its subcellular location is the extracellular space. It localises to the extracellular matrix. Functionally, ligand for members of the frizzled family of seven transmembrane receptors. Probable developmental protein. May be a signaling molecule which affects the development of discrete regions of tissues. Is likely to signal over only few cell diameters. This Ateles geoffroyi (Black-handed spider monkey) protein is Protein Wnt-2 (WNT2).